Here is a 305-residue protein sequence, read N- to C-terminus: Tyrosine recombinase XerC (305 aa).

One can recognise a Core-binding (CB) domain in the interval 4–95; that stretch reads ISIQELIKQW…TVKNFYKFLE (92 aa). The 183-residue stretch at 116–298 folds into the Tyr recombinase domain; sequence LLPKALSVDD…SIKHLEAVYN (183 aa). Catalysis depends on residues Arg-159, Lys-182, His-250, Arg-253, and His-276. The O-(3'-phospho-DNA)-tyrosine intermediate role is filled by Tyr-285.

It belongs to the 'phage' integrase family. XerC subfamily. In terms of assembly, forms a cyclic heterotetrameric complex composed of two molecules of XerC and two molecules of XerD.

The protein resides in the cytoplasm. Functionally, site-specific tyrosine recombinase, which acts by catalyzing the cutting and rejoining of the recombining DNA molecules. The XerC-XerD complex is essential to convert dimers of the bacterial chromosome into monomers to permit their segregation at cell division. It also contributes to the segregational stability of plasmids. This is Tyrosine recombinase XerC from Rickettsia typhi (strain ATCC VR-144 / Wilmington).